The following is a 61-amino-acid chain: Bacteriocin leucocin-A (61 aa).

Residues 1–24 constitute a propeptide that is removed on maturation; the sequence is MMNMKPTESYEQLDNSALEQVVGG. A disulfide bridge connects residues Cys-33 and Cys-38.

Belongs to the bacteriocin class IIA/YGNGV family.

The protein localises to the secreted. Its function is as follows. Inhibits a wide spectrum of lactic acid bacteria. The polypeptide is Bacteriocin leucocin-A (lcnA) (Leuconostoc gelidum).